The chain runs to 89 residues: Small ribosomal subunit protein uS15 (89 aa).

The span at 1 to 21 (MSITTEEKARVMKEYGTKDGD) shows a compositional bias: basic and acidic residues. The segment at 1–24 (MSITTEEKARVMKEYGTKDGDTGS) is disordered.

Belongs to the universal ribosomal protein uS15 family. As to quaternary structure, part of the 30S ribosomal subunit. Forms a bridge to the 50S subunit in the 70S ribosome, contacting the 23S rRNA.

One of the primary rRNA binding proteins, it binds directly to 16S rRNA where it helps nucleate assembly of the platform of the 30S subunit by binding and bridging several RNA helices of the 16S rRNA. Functionally, forms an intersubunit bridge (bridge B4) with the 23S rRNA of the 50S subunit in the ribosome. In Ruegeria pomeroyi (strain ATCC 700808 / DSM 15171 / DSS-3) (Silicibacter pomeroyi), this protein is Small ribosomal subunit protein uS15.